Here is a 129-residue protein sequence, read N- to C-terminus: Follitropin subunit beta (129 aa).

Positions 1 to 18 are cleaved as a signal peptide; the sequence is MKSIQFCFFFCCWKAICC. 6 disulfides stabilise this stretch: C21–C69, C35–C84, C38–C122, C46–C100, C50–C102, and C105–C112. Residues N25 and N42 are each glycosylated (N-linked (GlcNAc...) asparagine).

This sequence belongs to the glycoprotein hormones subunit beta family. Heterodimer. The active follitropin is a heterodimer composed of an alpha chain/CGA shared with other hormones and a unique beta chain/FSHB shown here.

It is found in the secreted. In terms of biological role, together with the alpha chain CGA constitutes follitropin, the follicle-stimulating hormone, and provides its biological specificity to the hormone heterodimer. Binds FSHR, a G protein-coupled receptor, on target cells to activate downstream signaling pathways. Follitropin is involved in follicle development and spermatogenesis in reproductive organs. In Cavia porcellus (Guinea pig), this protein is Follitropin subunit beta (FSHB).